Here is a 130-residue protein sequence, read N- to C-terminus: uncharacterized protein (130 aa).

The interval 1 to 34 is disordered; it reads MTAVGGSPPTRRCPATEDRAPATVATPSSTDPTA.

This sequence to M.tuberculosis Rv1583c.

This is an uncharacterized protein from Mycobacterium tuberculosis (strain CDC 1551 / Oshkosh).